Reading from the N-terminus, the 319-residue chain is Succinoglycan biosynthesis protein ExoW (319 aa).

Belongs to the glycosyltransferase 2 family.

It is found in the cell membrane. The protein operates within glycan metabolism; exopolysaccharide biosynthesis. Functionally, glycosyltransferase required for the synthesis of succinoglycan (EPS I). Needed for the addition of the seventh sugar (glucose), catalyzes the formation of a beta-1,3 linkage between the seventh and eighth sugar. This Rhizobium meliloti (strain 1021) (Ensifer meliloti) protein is Succinoglycan biosynthesis protein ExoW (exoW).